Here is a 330-residue protein sequence, read N- to C-terminus: DNA-directed RNA polymerase subunit alpha (330 aa).

The alpha N-terminal domain (alpha-NTD) stretch occupies residues 1–231 (MQTNLLKPKT…EQLAVFAQLE (231 aa)). The tract at residues 250-330 (FDPILLRPVD…NWPPAGLDKR (81 aa)) is alpha C-terminal domain (alpha-CTD).

This sequence belongs to the RNA polymerase alpha chain family. As to quaternary structure, homodimer. The RNAP catalytic core consists of 2 alpha, 1 beta, 1 beta' and 1 omega subunit. When a sigma factor is associated with the core the holoenzyme is formed, which can initiate transcription.

The enzyme catalyses RNA(n) + a ribonucleoside 5'-triphosphate = RNA(n+1) + diphosphate. In terms of biological role, DNA-dependent RNA polymerase catalyzes the transcription of DNA into RNA using the four ribonucleoside triphosphates as substrates. In Paracidovorax citrulli (strain AAC00-1) (Acidovorax citrulli), this protein is DNA-directed RNA polymerase subunit alpha.